A 285-amino-acid polypeptide reads, in one-letter code: Zinc transporter ZupT (285 aa).

3 consecutive transmembrane segments (helical) span residues 13-33 (AFLLTLLAGLATGIGSCIAFF), 41-61 (FLCVSLGFSAGVMIYVSMIEM), and 80-100 (WITVISFFAGIAIIALIDKFV). Residues Asn153 and Glu156 each coordinate Fe(2+). Glu156 contacts Zn(2+). The helical transmembrane segment at 160–180 (TFVSALEGASLAIPITIAIAI) threads the bilayer. His181 serves as a coordination point for Zn(2+). Fe(2+) is bound by residues Asn182, Glu185, and Glu214. Glu185 serves as a coordination point for Zn(2+). 3 helical membrane passes run 204-224 (FLYSFLSGMSEPIGAIIGYTL), 228-248 (IFNDITLGILLSAVAGIMVFI), and 265-285 (LAIYGLIAGMVVMAVSLLLFI).

This sequence belongs to the ZIP transporter (TC 2.A.5) family. ZupT subfamily.

It localises to the cell membrane. The catalysed reaction is Zn(2+)(in) = Zn(2+)(out). Mediates zinc uptake. May also transport other divalent cations. The polypeptide is Zinc transporter ZupT (Clostridium perfringens (strain 13 / Type A)).